The chain runs to 273 residues: Glutamate racemase (273 aa).

Substrate contacts are provided by residues 17–18 (DS) and 49–50 (YG). The Proton donor/acceptor role is filled by cysteine 80. Residue 81–82 (NT) coordinates substrate. Cysteine 190 acts as the Proton donor/acceptor in catalysis. Residue 191-192 (TH) coordinates substrate.

It belongs to the aspartate/glutamate racemases family.

It catalyses the reaction L-glutamate = D-glutamate. Its pathway is cell wall biogenesis; peptidoglycan biosynthesis. Provides the (R)-glutamate required for cell wall biosynthesis. The chain is Glutamate racemase from Corynebacterium glutamicum (strain ATCC 13032 / DSM 20300 / JCM 1318 / BCRC 11384 / CCUG 27702 / LMG 3730 / NBRC 12168 / NCIMB 10025 / NRRL B-2784 / 534).